Consider the following 210-residue polypeptide: Prolactin (210 aa).

The first 23 residues, 1 to 23 (MAEGSRLYFAVTVLMCAFVSING), serve as a signal peptide directing secretion. Cystine bridges form between cysteine 69/cysteine 183 and cysteine 200/cysteine 210.

This sequence belongs to the somatotropin/prolactin family. Pituitary gland.

It localises to the secreted. The sequence is that of Prolactin (prl) from Hypophthalmichthys nobilis (Bighead carp).